The following is a 345-amino-acid chain: Protein RecA (345 aa).

63–70 (GPESSGKT) contacts ATP. A disordered region spans residues 326-345 (VLSDALMTDPEPDADGTPED). Positions 335–345 (PEPDADGTPED) are enriched in acidic residues.

It belongs to the RecA family.

The protein resides in the cytoplasm. Its function is as follows. Can catalyze the hydrolysis of ATP in the presence of single-stranded DNA, the ATP-dependent uptake of single-stranded DNA by duplex DNA, and the ATP-dependent hybridization of homologous single-stranded DNAs. It interacts with LexA causing its activation and leading to its autocatalytic cleavage. In Gluconobacter oxydans (strain 621H) (Gluconobacter suboxydans), this protein is Protein RecA.